The chain runs to 179 residues: ATP synthase subunit delta (179 aa).

The protein belongs to the ATPase delta chain family. As to quaternary structure, F-type ATPases have 2 components, F(1) - the catalytic core - and F(0) - the membrane proton channel. F(1) has five subunits: alpha(3), beta(3), gamma(1), delta(1), epsilon(1). F(0) has three main subunits: a(1), b(2) and c(10-14). The alpha and beta chains form an alternating ring which encloses part of the gamma chain. F(1) is attached to F(0) by a central stalk formed by the gamma and epsilon chains, while a peripheral stalk is formed by the delta and b chains.

Its subcellular location is the cell inner membrane. Functionally, f(1)F(0) ATP synthase produces ATP from ADP in the presence of a proton or sodium gradient. F-type ATPases consist of two structural domains, F(1) containing the extramembraneous catalytic core and F(0) containing the membrane proton channel, linked together by a central stalk and a peripheral stalk. During catalysis, ATP synthesis in the catalytic domain of F(1) is coupled via a rotary mechanism of the central stalk subunits to proton translocation. In terms of biological role, this protein is part of the stalk that links CF(0) to CF(1). It either transmits conformational changes from CF(0) to CF(1) or is implicated in proton conduction. The protein is ATP synthase subunit delta of Paraburkholderia phymatum (strain DSM 17167 / CIP 108236 / LMG 21445 / STM815) (Burkholderia phymatum).